Consider the following 75-residue polypeptide: Small ribosomal subunit protein bS18 (75 aa).

It belongs to the bacterial ribosomal protein bS18 family. In terms of assembly, part of the 30S ribosomal subunit. Forms a tight heterodimer with protein bS6.

Its function is as follows. Binds as a heterodimer with protein bS6 to the central domain of the 16S rRNA, where it helps stabilize the platform of the 30S subunit. In Shewanella halifaxensis (strain HAW-EB4), this protein is Small ribosomal subunit protein bS18.